We begin with the raw amino-acid sequence, 312 residues long: Lipid-translocating exporter-like protein RTA1 (312 aa).

The disordered stretch occupies residues 1–21; the sequence is MSPESKKITAHGSTSMPLSRT. Polar residues predominate over residues 11–21; the sequence is HGSTSMPLSRT. 6 helical membrane passes run 29-49, 61-81, 103-123, 142-162, 183-203, and 223-243; these read IPLT…FFLA, LSTM…YFIC, FITF…LLAG, AMIT…SFHV, FMMV…RSAY, and SLML…ILPI. 2 N-linked (GlcNAc...) asparagine glycosylation sites follow: N258 and N304.

Belongs to the lipid-translocating exporter (LTE) (TC 9.A.26.1) family.

Its subcellular location is the membrane. It participates in siderophore biosynthesis. Its function is as follows. Lipid-translocating exporter-like protein; part of the gene cluster that mediates the biosynthesis of hydroxamate-containing siderophores that play a critical role in virulence via intracellular iron acquisition during macrophage infection. This chain is Lipid-translocating exporter-like protein RTA1, found in Ajellomyces capsulatus (Darling's disease fungus).